A 1066-amino-acid chain; its full sequence is Isoleucine--tRNA ligase (1066 aa).

The 'HIGH' region motif lies at 49-59 (PYVSGAIHLGT). The 'KMSKS' region motif lies at 625 to 629 (KMSKS). Position 628 (K628) interacts with ATP.

This sequence belongs to the class-I aminoacyl-tRNA synthetase family. IleS type 2 subfamily. In terms of assembly, monomer. The cofactor is Zn(2+).

The protein localises to the cytoplasm. It carries out the reaction tRNA(Ile) + L-isoleucine + ATP = L-isoleucyl-tRNA(Ile) + AMP + diphosphate. In terms of biological role, catalyzes the attachment of isoleucine to tRNA(Ile). As IleRS can inadvertently accommodate and process structurally similar amino acids such as valine, to avoid such errors it has two additional distinct tRNA(Ile)-dependent editing activities. One activity is designated as 'pretransfer' editing and involves the hydrolysis of activated Val-AMP. The other activity is designated 'posttransfer' editing and involves deacylation of mischarged Val-tRNA(Ile). The sequence is that of Isoleucine--tRNA ligase from Pyrococcus furiosus (strain ATCC 43587 / DSM 3638 / JCM 8422 / Vc1).